The following is a 320-amino-acid chain: MKKIAILTSGGDAPGMNAAIRAVVRTAIDKGLEVMGVQRGYSGLLNGELFAMNRTSVSDIIQRGGTILRTARCPEFKDEEVRKRAVKILNAYGVDALVVIGGDGSFMGAKLLSKLGIKTIGLPGTIDNDLAYTDFTIGFDTALNTIVDAINKIRDTSTSHERVSIIEVMGRDCGDLALHAGISSGAEAIIVPEMGEFDRDALCRTILEGKNHGKTHSIVILAEGIGGAEELSKYVQELTGIEARATILGHIQRGGAPSASDRVLASRLGARAVEVLLQGETSRVIGIRDNQIIDQDIDEALAMESKFDLDLYNVAEVLSR.

Gly-11 provides a ligand contact to ATP. 21 to 25 (RAVVR) provides a ligand contact to ADP. ATP is bound by residues 72–73 (RC) and 102–105 (GDGS). Asp-103 is a binding site for Mg(2+). 125–127 (TID) serves as a coordination point for substrate. The active-site Proton acceptor is Asp-127. Position 154 (Arg-154) interacts with ADP. Residues Arg-162 and 169–171 (MGR) each bind substrate. Residues 185 to 187 (GAE) and 214 to 216 (KTH) each bind ADP. Substrate contacts are provided by residues Glu-223, Arg-244, and 250–253 (HIQR).

It belongs to the phosphofructokinase type A (PFKA) family. ATP-dependent PFK group I subfamily. Prokaryotic clade 'B1' sub-subfamily. In terms of assembly, homotetramer. The cofactor is Mg(2+).

It localises to the cytoplasm. It catalyses the reaction beta-D-fructose 6-phosphate + ATP = beta-D-fructose 1,6-bisphosphate + ADP + H(+). It functions in the pathway carbohydrate degradation; glycolysis; D-glyceraldehyde 3-phosphate and glycerone phosphate from D-glucose: step 3/4. Its activity is regulated as follows. Allosterically activated by ADP and other diphosphonucleosides, and allosterically inhibited by phosphoenolpyruvate. Its function is as follows. Catalyzes the phosphorylation of D-fructose 6-phosphate to fructose 1,6-bisphosphate by ATP, the first committing step of glycolysis. The sequence is that of ATP-dependent 6-phosphofructokinase from Clostridium botulinum (strain Alaska E43 / Type E3).